A 901-amino-acid chain; its full sequence is HTH-type transcriptional regulator MalT (901 aa).

Residue S39 to T46 coordinates ATP. One can recognise an HTH luxR-type domain in the interval E829 to L894. Residues N853 to R872 constitute a DNA-binding region (H-T-H motif).

The protein belongs to the MalT family. Monomer in solution. Oligomerizes to an active state in the presence of the positive effectors ATP and maltotriose.

With respect to regulation, activated by ATP and maltotriose, which are both required for DNA binding. Its function is as follows. Positively regulates the transcription of the maltose regulon whose gene products are responsible for uptake and catabolism of malto-oligosaccharides. Specifically binds to the promoter region of its target genes, recognizing a short DNA motif called the MalT box. The chain is HTH-type transcriptional regulator MalT from Klebsiella pneumoniae (strain 342).